The following is a 206-amino-acid chain: Translation initiation factor IF-3 (206 aa).

This sequence belongs to the IF-3 family. In terms of assembly, monomer.

The protein resides in the cytoplasm. IF-3 binds to the 30S ribosomal subunit and shifts the equilibrium between 70S ribosomes and their 50S and 30S subunits in favor of the free subunits, thus enhancing the availability of 30S subunits on which protein synthesis initiation begins. The polypeptide is Translation initiation factor IF-3 (Chlorobium luteolum (strain DSM 273 / BCRC 81028 / 2530) (Pelodictyon luteolum)).